Here is a 54-residue protein sequence, read N- to C-terminus: Large ribosomal subunit protein bL33 (54 aa).

Belongs to the bacterial ribosomal protein bL33 family.

This Rhodopirellula baltica (strain DSM 10527 / NCIMB 13988 / SH1) protein is Large ribosomal subunit protein bL33.